The sequence spans 533 residues: Zona pellucida sperm-binding protein 3 receptor (533 aa).

An N-terminal signal peptide occupies residues 1–28; that stretch reads MFPRLQAVSAPALLQITLMAVLLAPVLG. Sushi domains lie at 29–88, 89–150, 151–215, 216–275, 276–342, 343–408, and 409–467; these read DCGP…FCAK, KRCR…ECVI, VKCD…TCEK, VICR…TCEP, NGCI…GCER, VCCP…ACES, and AVCL…KCEW. 14 disulfide bridges follow: cysteine 30–cysteine 74, cysteine 60–cysteine 86, cysteine 91–cysteine 132, cysteine 118–cysteine 148, cysteine 153–cysteine 196, cysteine 182–cysteine 213, cysteine 218–cysteine 260, cysteine 246–cysteine 273, cysteine 278–cysteine 328, cysteine 312–cysteine 340, cysteine 345–cysteine 393, cysteine 378–cysteine 406, cysteine 411–cysteine 452, and cysteine 438–cysteine 465. Asparagine 68 and asparagine 77 each carry an N-linked (GlcNAc...) asparagine glycan. Asparagine 185, asparagine 191, and asparagine 200 each carry an N-linked (GlcNAc...) asparagine glycan. N-linked (GlcNAc...) asparagine glycosylation is found at asparagine 433 and asparagine 455.

In terms of assembly, homooligomer; disulfide-linked. May contain 6-8 monomers per oligomer. In terms of processing, the N-terminus may be blocked. In terms of tissue distribution, testis. Not expressed in heart, brain, liver or kidney.

Its subcellular location is the cytoplasmic vesicle. It localises to the secretory vesicle. It is found in the acrosome lumen. Probably involved in the formation of the dense core and M1 domain of the acrosome. May also regulate the release of certain secretory proteins following the acrosomal reaction. This is Zona pellucida sperm-binding protein 3 receptor (ZP3R) from Cavia porcellus (Guinea pig).